The primary structure comprises 667 residues: DNA ligase (667 aa).

NAD(+) contacts are provided by residues 34-38 (DSEYD), 83-84 (SL), and Glu-112. Lys-114 (N6-AMP-lysine intermediate) is an active-site residue. Residues Arg-135, Glu-169, Lys-285, and Lys-309 each coordinate NAD(+). Residues Cys-403, Cys-406, Cys-421, and Cys-426 each contribute to the Zn(2+) site. One can recognise a BRCT domain in the interval 589–667 (ASDSYFAGKT…EARLISELKK (79 aa)).

Belongs to the NAD-dependent DNA ligase family. LigA subfamily. It depends on Mg(2+) as a cofactor. The cofactor is Mn(2+).

The enzyme catalyses NAD(+) + (deoxyribonucleotide)n-3'-hydroxyl + 5'-phospho-(deoxyribonucleotide)m = (deoxyribonucleotide)n+m + AMP + beta-nicotinamide D-nucleotide.. Functionally, DNA ligase that catalyzes the formation of phosphodiester linkages between 5'-phosphoryl and 3'-hydroxyl groups in double-stranded DNA using NAD as a coenzyme and as the energy source for the reaction. It is essential for DNA replication and repair of damaged DNA. In Bacillus licheniformis (strain ATCC 14580 / DSM 13 / JCM 2505 / CCUG 7422 / NBRC 12200 / NCIMB 9375 / NCTC 10341 / NRRL NRS-1264 / Gibson 46), this protein is DNA ligase.